The primary structure comprises 2443 residues: Non-reducing polyketide synthase olcA (2443 aa).

In terms of domain architecture, Ketosynthase family 3 (KS3) spans 5–442 (IEPIAIVGTG…GANVHAILES (438 aa)). Active-site for beta-ketoacyl synthase activity residues include cysteine 178, histidine 317, and histidine 362. The segment at 550–885 (GVFTGQGAQW…AAIGSLWTYL (336 aa)) is malonyl-CoA:ACP transacylase (MAT) domain. The active-site For acyl/malonyl transferase activity is the serine 645. The segment at 940–1070 (NCLLGVLSPD…GVLTMTLGSA (131 aa)) is N-terminal hotdog fold. The 292-residue stretch at 940 to 1231 (NCLLGVLSPD…LVPLLEDLAD (292 aa)) folds into the PKS/mFAS DH domain. Residues 989-1497 (ALESAKLIAG…SLPVTISNMR (509 aa)) form a product template (PT) domain region. The interval 1085–1231 (MRAVDIEDFY…LVPLLEDLAD (147 aa)) is C-terminal hotdog fold. Residues 1771 to 2159 (NKRYLAHTHV…LERFTCALPP (389 aa)) are methyltransferase (CMeT) domain. The Carrier domain occupies 2359–2434 (EILTSHLLTQ…EITSSAAAKL (76 aa)). Residue serine 2394 is modified to O-(pantetheine 4'-phosphoryl)serine.

The enzyme catalyses nicotinyl-CoA + 2 malonyl-CoA + H(+) = 4-hydroxy-6-(pyridin-3-yl)-2H-pyran-2-one + 2 CO2 + 3 CoA. It participates in secondary metabolite biosynthesis; terpenoid biosynthesis. Functionally, non-reducing polyketide synthase; part of the gene cluster that mediates the biosynthesis of 15-deoxyoxalicine B. The first step of the pathway is the synthesis of nicotinyl-CoA from nicotinic acid by the nicotinic acid-CoA ligase olcI. Nicotinyl-CoA is then a substrate of polyketide synthase olcA to produce 4-hydroxy-6-(3-pyridinyl)-2H-pyran-2-one (HPPO) which is further prenylated by the polyprenyl transferase olcH to yield geranylgeranyl-HPPO. Geranylgeranyl pyrophosphate is provided by the cluster-specific geranylgeranyl pyrophosphate synthase olcC. The FAD-dependent monooxygenase olcE catalyzes the epoxidation of geranylgeranyl-HPPO and the terpene cyclase olcD catalyzes the cyclization of the terpenoid component, resulting in the formation of the tricyclic terpene moiety seen in predecaturin E. The cytochrome P450 monooxygenase then catalyzes the allylic oxidation of predecaturin E, which is followed by spirocylization with concomitant loss of one molecule of water to form decaturin E. Decaturin E is the substrate of the cytochrome P450 monooxygenase olcJ which hydroxylates it at the C-29 position to form decaturin F. The short-chain dehydrogenase/reductase olcF may catalyze the oxidation of decaturin F to generate the 29-hydroxyl-27-one intermediate, and subsequent hemiacetal formation probably leads to the formation of decaturin C. The dioxygenase olcK may be a peroxisomal enzyme that catalyzes the hydroxylation of decaturin C into decaturin A once decaturin C is shuttled into the peroxisome by the MFS transporter olcL. Finally the cytochrome P450 monooxygenase olcB catalyzes the oxidative rearrangement to yield 15-deoxyoxalicine B. In the absence of olcJ, decaturin E may be shunted to a pathway in which it is oxidized to a ketone, possibly by olcF, to form decaturin D, which undergoes further allylic oxidation to yield decaturin G. Moreover, in the absence of oclK or oclL, oclB can convert decaturin C into 15-deoxyoxalicine A. This Penicillium canescens protein is Non-reducing polyketide synthase olcA.